We begin with the raw amino-acid sequence, 92 residues long: Small ribosomal subunit protein uS19c (92 aa).

This sequence belongs to the universal ribosomal protein uS19 family.

It localises to the plastid. The protein localises to the chloroplast. Protein S19 forms a complex with S13 that binds strongly to the 16S ribosomal RNA. The chain is Small ribosomal subunit protein uS19c from Dioscorea elephantipes (Elephant's foot yam).